We begin with the raw amino-acid sequence, 653 residues long: Brain-enriched guanylate kinase-associated protein (653 aa).

A Phosphotyrosine modification is found at Y186. The disordered stretch occupies residues 241-271 (PGSLSSHLSEASAQDLGFPEGLEKPGSRPPY). The segment covering 243–252 (SLSSHLSEAS) has biased composition (polar residues). 4 positions are modified to phosphoserine: S249, S278, S295, and S314. A disordered region spans residues 288–329 (RHQDRRPSVEGPGSDVGFLQAQNSTDSTAEEEEEEEEDTEAG). Positions 315 to 327 (TAEEEEEEEEDTE) are enriched in acidic residues. Phosphoserine is present on residues S400 and S427. R435 is subject to Asymmetric dimethylarginine. 8 positions are modified to phosphoserine: S523, S533, S535, S558, S560, S564, S613, and S623. Residues 587–653 (GASGSPEPEL…KAQLYGTLLN (67 aa)) are disordered.

Interacts with DLG4 and DLGAP1 and forms a ternary complex.

It is found in the cytoplasm. It localises to the membrane. May sustain the structure of the postsynaptic density (PSD). In Ovis aries (Sheep), this protein is Brain-enriched guanylate kinase-associated protein (BEGAIN).